Here is a 118-residue protein sequence, read N- to C-terminus: Small ribosomal subunit protein uS13 (118 aa).

The interval 94-118 is disordered; that stretch reads SLPLRGQRTKTNARTRKGPRKPIKK.

It belongs to the universal ribosomal protein uS13 family. In terms of assembly, part of the 30S ribosomal subunit. Forms a loose heterodimer with protein S19. Forms two bridges to the 50S subunit in the 70S ribosome.

Its function is as follows. Located at the top of the head of the 30S subunit, it contacts several helices of the 16S rRNA. In the 70S ribosome it contacts the 23S rRNA (bridge B1a) and protein L5 of the 50S subunit (bridge B1b), connecting the 2 subunits; these bridges are implicated in subunit movement. Contacts the tRNAs in the A and P-sites. The chain is Small ribosomal subunit protein uS13 from Shewanella amazonensis (strain ATCC BAA-1098 / SB2B).